Reading from the N-terminus, the 923-residue chain is Serine/threonine-protein phosphatase 6 regulatory subunit 2 (923 aa).

Phosphoserine is present on serine 289. Disordered regions lie at residues 409 to 441, 662 to 685, and 743 to 766; these read EASG…SPPE, VPGL…DSAG, and RCSS…PEKT. Over residues 430-441 the composition is skewed to polar residues; that stretch reads LETTPSITSPPE. Serine 746 and serine 796 each carry phosphoserine.

This sequence belongs to the SAPS family. Protein phosphatase 6 (PP6) holoenzyme is proposed to be a heterotrimeric complex formed by the catalytic subunit, a SAPS domain-containing subunit (PP6R) and an ankyrin repeat-domain containing regulatory subunit (ARS). Interacts with PPP6C and NFKBIE. Interacts with ANKRD28. Strongest expression in bladder and lower levels found in heart and pancreas. Very weak expression observed in all other tissues tested.

The protein resides in the cytoplasm. Regulatory subunit of protein phosphatase 6 (PP6). May function as a scaffolding PP6 subunit. Involved in the PP6-mediated dephosphorylation of NFKBIE opposing its degradation in response to TNF-alpha. The protein is Serine/threonine-protein phosphatase 6 regulatory subunit 2 (Ppp6r2) of Mus musculus (Mouse).